Consider the following 549-residue polypeptide: Cell death protein 4 (549 aa).

A CARD domain is found at 1 to 91 (MLCEIECRAL…HLADFLEDYI (91 aa)). ATP-binding residues include tyrosine 131, glycine 162, glycine 164, lysine 165, serine 166, valine 167, arginine 273, threonine 367, and tyrosine 369. Positions 133–417 (REYHVDRVIK…KLWSCVIPVD (285 aa)) constitute an NB-ARC domain. Mg(2+) is bound at residue serine 166.

As to quaternary structure, associates as an asymmetric homodimer with ced-9. Only one ced-4 molecule within the dimer interacts directly with ced-9. Upon release from ced-9, forms a multimer, known as the apoptosome, and interacts with ced-3; the interaction results in ced-3 autoproteolytic cleavage and activation. Multiple oligomeric states of the apoptosome are observed including hexamers, heptamers and octamers. The hexamers likely represent a pre-mature state of the apoptosome and may contribute to the regulation of ced-3 activation. The apoptosome multimer also interacts with two processed ced-3 to form a stable holoenzyme. Interacts with sex-determining protein fem-1. May form a complex composed of ced-3, ced-4 and mac-1 or of ced-9, ced-4 and mac-1. Within the complex, interacts with mac-1.

The protein resides in the mitochondrion. Its subcellular location is the cytoplasm. The protein localises to the perinuclear region. In terms of biological role, component of the egl-1, ced-9, ced-4 and ced-3 apoptotic signaling cascade required for the initiation of programmed cell death in cells fated to die during embryonic and postembryonic development. During oogenesis, required for germline apoptosis downstream of ced-9 and upstream of ced-3 but independently of egl-1. May regulate germline apoptosis in response to DNA damage, probably downstream of let-60/ras and mpk-1 pathway. Regulates CEP neuron apoptosis in response to high Al(3+) levels. During male tail morphogenesis, promotes apoptosis of the tail-spike cell upstream of ced-3 but independently of egl-1 and ced-9. May play a role in sex-specific cell apoptosis, probably by promoting ced-3-mediated cleavage of sex-determining protein fem-1. During larval development, required for the elimination of transient presynaptic components downstream of egl-1 and ced-9 and upstream of ced-3 apoptotic pathway. Downstream of calreticulin crt-1 and upstream of ced-3 and independently of egl-1 and ced-9, plays a role in the initial steps of axonal regrowth following axotomy. Together with ain-1, a component of the miRNA-induced-silencing complex (miRISC), and probably upstream of ced-3, regulates temporal cell fate patterning during larval development. May play a role in resistance to S.typhimurium-mediated infection. Plays a major role in programmed cell death. egl-1 binds to and directly inhibits the activity of ced-9, releasing the cell death activator ced-4 from a ced-9/ced-4-containing protein complex and allowing ced-4 to induce caspase ced-3 autoproteolytic cleavage and activation. Also forms a holoenzyme with processed ced-3 enhancing ced-3 activity. Functionally, prevents programmed cell death. This is Cell death protein 4 (ced-4) from Caenorhabditis elegans.